Here is a 497-residue protein sequence, read N- to C-terminus: Guanosine-5'-triphosphate,3'-diphosphate pyrophosphatase (497 aa).

It belongs to the GppA/Ppx family. GppA subfamily.

It carries out the reaction guanosine 3'-diphosphate 5'-triphosphate + H2O = guanosine 3',5'-bis(diphosphate) + phosphate + H(+). It functions in the pathway purine metabolism; ppGpp biosynthesis; ppGpp from GTP: step 2/2. Catalyzes the conversion of pppGpp to ppGpp. Guanosine pentaphosphate (pppGpp) is a cytoplasmic signaling molecule which together with ppGpp controls the 'stringent response', an adaptive process that allows bacteria to respond to amino acid starvation, resulting in the coordinated regulation of numerous cellular activities. In Aliivibrio fischeri (strain MJ11) (Vibrio fischeri), this protein is Guanosine-5'-triphosphate,3'-diphosphate pyrophosphatase.